We begin with the raw amino-acid sequence, 718 residues long: Glycine--tRNA ligase beta subunit (718 aa).

The protein belongs to the class-II aminoacyl-tRNA synthetase family. Tetramer of two alpha and two beta subunits.

Its subcellular location is the cytoplasm. The catalysed reaction is tRNA(Gly) + glycine + ATP = glycyl-tRNA(Gly) + AMP + diphosphate. This is Glycine--tRNA ligase beta subunit from Mesorhizobium japonicum (strain LMG 29417 / CECT 9101 / MAFF 303099) (Mesorhizobium loti (strain MAFF 303099)).